Here is a 794-residue protein sequence, read N- to C-terminus: Protein smoothened (794 aa).

The signal sequence occupies residues Gly-1 to Gly-15. At Pro-16 to His-201 the chain is on the extracellular side. An N-linked (GlcNAc...) asparagine glycan is attached at Asn-25. 5 cysteine pairs are disulfide-bonded: Cys-34-Cys-148, Cys-40-Cys-104, Cys-48-Cys-97, Cys-88-Cys-124, and Cys-117-Cys-139. The FZ domain occupies Arg-35–Glu-151. A cholesterol-binding site is contributed by Asp-65. Asn-158 carries an N-linked (GlcNAc...) asparagine glycan. Intrachain disulfides connect Cys-163–Cys-183 and Cys-187–Cys-264. Residues Val-202–Val-222 traverse the membrane as a helical segment. Over Ala-223 to Tyr-231 the chain is Cytoplasmic. A helical transmembrane segment spans residues Pro-232 to Ala-252. Over Gln-253 to Cys-283 the chain is Extracellular. Residue Asn-278 is glycosylated (N-linked (GlcNAc...) asparagine). Cys-283 and Cys-359 are disulfide-bonded. Residues Val-284–Leu-304 form a helical membrane-spanning segment. The Cytoplasmic segment spans residues Thr-305–Ser-327. Residues Tyr-328 to Ala-348 traverse the membrane as a helical segment. Topologically, residues Gln-349–Gly-371 are extracellular. Cholesterol is bound at residue Tyr-363. The chain crosses the membrane as a helical span at residues Phe-372–Val-392. At Met-393–Arg-420 the chain is on the cytoplasmic side. The helical transmembrane segment at Leu-421–Phe-440 threads the bilayer. Topologically, residues Tyr-441 to Ala-493 are extracellular. Cys-459 and Cys-476 are disulfide-bonded. An N-linked (GlcNAc...) asparagine glycan is attached at Asn-462. Residues Met-494–Trp-514 traverse the membrane as a helical segment. At Lys-515–Phe-794 the chain is on the cytoplasmic side. Disordered stretches follow at residues Leu-634 to Arg-655 and Pro-723 to Leu-773. The span at Arg-637–Lys-647 shows a compositional bias: basic residues.

This sequence belongs to the G-protein coupled receptor Fz/Smo family. Homodimer.

It localises to the cell membrane. It is found in the cell projection. The protein localises to the cilium. G protein-coupled receptor which associates with the patched protein (PTCH) to transduce hedgehog protein signaling. Binding of sonic hedgehog (SHH) to its receptor patched prevents inhibition of smoothened (SMO) by patched. When active, SMO binds to and sequesters protein kinase A catalytic subunit PRKACA at the cell membrane, preventing PRKACA-mediated phosphorylation of GLI transcription factors which releases the GLI proteins from PRKACA-mediated inhibition and allows for transcriptional activation of hedgehog pathway target genes. The chain is Protein smoothened (SMO) from Gallus gallus (Chicken).